A 553-amino-acid chain; its full sequence is MGSDITATPAWQALSRHHDEIRAKDLRGLFADDPTRGTGFALTVGDLYIDYSKHRVTRETLDLLLDLARTAGLPAKRDAMFSGAHINTSEDRAVLHTALRLPRDASLTVDGQDVVADVHEVLDRMGDFTDRLRSGEWRGATGERITTVVNIGIGGSDLGPVMVDQALRHYADAGISARFVSNVDPADLVAKLNGLDPATTLFIIASKTFSTLETLTNATAARRWLVDGLGGSAGQDAVSKHFVAVSTNAKLVDDFGIDTANMFGFWDWVGGRYSVDSAIGLSVMAVIGRERFAEFLAGFHLVDEHFRSAPLEANAPVLLGLIGLWYSNFFGAETRAVLPYSNDLARFAAYLQQLTMESNGKSVRADGTPVSTGTGEIFWGEPGTNGQHAFYQLLHQGTRLVPADFIGFSEPTDDLPTADGTGSMHDLLMSNFFAQTQVLAFGKTAEEITGEGTPPNVVPHKVMPGNRPSTSILATKLTPSVVGQLIALYEHQVFVEGVIWGIDSFDQWGVELGKTQAKALLPVLTGADSPAAQSDSSTDALVRRYRTERGRTA.

The active-site Proton donor is the E357. Catalysis depends on residues H388 and K514. Residues 527–553 form a disordered region; that stretch reads ADSPAAQSDSSTDALVRRYRTERGRTA. The span at 541–553 shows a compositional bias: basic and acidic residues; the sequence is LVRRYRTERGRTA.

Belongs to the GPI family.

It is found in the cytoplasm. It carries out the reaction alpha-D-glucose 6-phosphate = beta-D-fructose 6-phosphate. It participates in carbohydrate biosynthesis; gluconeogenesis. Its pathway is carbohydrate degradation; glycolysis; D-glyceraldehyde 3-phosphate and glycerone phosphate from D-glucose: step 2/4. In terms of biological role, catalyzes the reversible isomerization of glucose-6-phosphate to fructose-6-phosphate. The polypeptide is Glucose-6-phosphate isomerase (Mycolicibacterium vanbaalenii (strain DSM 7251 / JCM 13017 / BCRC 16820 / KCTC 9966 / NRRL B-24157 / PYR-1) (Mycobacterium vanbaalenii)).